We begin with the raw amino-acid sequence, 219 residues long: Probable GTP-binding protein EngB (219 aa).

The EngB-type G domain maps to 24–207 (VQPEIAFAGR…HALIESWLRP (184 aa)). GTP is bound by residues 32 to 39 (GRSNAGKS), 59 to 63 (GRTQH), 81 to 84 (DLPG), 148 to 151 (TKCD), and 185 to 188 (LFSA). Mg(2+) is bound by residues Ser39 and Thr61.

Belongs to the TRAFAC class TrmE-Era-EngA-EngB-Septin-like GTPase superfamily. EngB GTPase family. It depends on Mg(2+) as a cofactor.

In terms of biological role, necessary for normal cell division and for the maintenance of normal septation. The chain is Probable GTP-binding protein EngB from Burkholderia thailandensis (strain ATCC 700388 / DSM 13276 / CCUG 48851 / CIP 106301 / E264).